The chain runs to 520 residues: Bifunctional purine biosynthesis protein PurH (520 aa).

In terms of domain architecture, MGS-like spans 1–147 (MAKIGRALIS…KNNRDVTVVV (147 aa)).

The protein belongs to the PurH family.

It carries out the reaction (6R)-10-formyltetrahydrofolate + 5-amino-1-(5-phospho-beta-D-ribosyl)imidazole-4-carboxamide = 5-formamido-1-(5-phospho-D-ribosyl)imidazole-4-carboxamide + (6S)-5,6,7,8-tetrahydrofolate. The catalysed reaction is IMP + H2O = 5-formamido-1-(5-phospho-D-ribosyl)imidazole-4-carboxamide. It participates in purine metabolism; IMP biosynthesis via de novo pathway; 5-formamido-1-(5-phospho-D-ribosyl)imidazole-4-carboxamide from 5-amino-1-(5-phospho-D-ribosyl)imidazole-4-carboxamide (10-formyl THF route): step 1/1. The protein operates within purine metabolism; IMP biosynthesis via de novo pathway; IMP from 5-formamido-1-(5-phospho-D-ribosyl)imidazole-4-carboxamide: step 1/1. The sequence is that of Bifunctional purine biosynthesis protein PurH from Geobacter sp. (strain M21).